The following is a 318-amino-acid chain: ADP-ribosyl cyclase/cyclic ADP-ribose hydrolase 2 (318 aa).

Positions 1 to 32 (MAAQGCAASRLLQLLLQLLLLLLLLAAGGARA) are cleaved as a signal peptide. Cystine bridges form between C51-C67, C83-C163, and C144-C157. Residues N66 and N95 are each glycosylated (N-linked (GlcNAc...) asparagine). W109 provides a ligand contact to NAD(+). W109 is a binding site for nicotinamide. N-linked (GlcNAc...) asparagine glycosylation is present at N148. W172 lines the NAD(+) pocket. A glycan (N-linked (GlcNAc...) asparagine) is linked at N192. NAD(+) is bound at residue E210. Intrachain disulfides connect C238/C259 and C271/C280. Residue A293 is the site of GPI-anchor amidated alanine attachment. A propeptide spans 294 to 318 (PSLYTEQRAGLIIPLFLVLASRTQL) (removed in mature form).

The protein belongs to the ADP-ribosyl cyclase family. Homodimer. Expressed in various tissues including placenta, lung, liver and kidney.

The protein resides in the cell membrane. The enzyme catalyses NAD(+) + H2O = ADP-D-ribose + nicotinamide + H(+). It carries out the reaction NAD(+) = cyclic ADP-beta-D-ribose + nicotinamide + H(+). The catalysed reaction is cyclic ADP-beta-D-ribose + H2O = ADP-D-ribose. With respect to regulation, ADP-ribosyl cyclase and cADPR hydrolase activities are both activated by Zn(2+) or Mn(2+), and inhibited by Cu(2+), while Mg(2+) and Ca(2+) do not have any significant influence. Its function is as follows. Catalyzes both the synthesis of cyclic ADP-beta-D-ribose (cADPR) from NAD(+), and its hydrolysis to ADP-D-ribose (ADPR). Cyclic ADPR is known to serve as an endogenous second messenger that elicits calcium release from intracellular stores, and thus regulates the mobilization of intracellular calcium. May be involved in pre-B-cell growth. The protein is ADP-ribosyl cyclase/cyclic ADP-ribose hydrolase 2 (BST1) of Homo sapiens (Human).